The following is a 308-amino-acid chain: UPF0282 protein PYRAB09800 (308 aa).

The protein belongs to the UPF0282 family.

The polypeptide is UPF0282 protein PYRAB09800 (Pyrococcus abyssi (strain GE5 / Orsay)).